We begin with the raw amino-acid sequence, 124 residues long: Small ribosomal subunit protein uS12 (124 aa).

3-methylthioaspartic acid is present on Asp-89.

This sequence belongs to the universal ribosomal protein uS12 family. As to quaternary structure, part of the 30S ribosomal subunit. Contacts proteins S8 and S17. May interact with IF1 in the 30S initiation complex.

In terms of biological role, with S4 and S5 plays an important role in translational accuracy. Its function is as follows. Interacts with and stabilizes bases of the 16S rRNA that are involved in tRNA selection in the A site and with the mRNA backbone. Located at the interface of the 30S and 50S subunits, it traverses the body of the 30S subunit contacting proteins on the other side and probably holding the rRNA structure together. The combined cluster of proteins S8, S12 and S17 appears to hold together the shoulder and platform of the 30S subunit. The chain is Small ribosomal subunit protein uS12 from Glaesserella parasuis serovar 5 (strain SH0165) (Haemophilus parasuis).